Reading from the N-terminus, the 93-residue chain is MPRSLKKGPFVDEHLLKKVDVQNEKNTKQVIKTWSRRSTIIPDFIGHTFAVHDGRKHVPVFVTESMVGHKLGEFAPTRTFKGHIKDDRKSKRR.

Belongs to the universal ribosomal protein uS19 family.

Functionally, protein S19 forms a complex with S13 that binds strongly to the 16S ribosomal RNA. The sequence is that of Small ribosomal subunit protein uS19 from Mycobacterium tuberculosis (strain ATCC 25177 / H37Ra).